Consider the following 338-residue polypeptide: Anthranilate phosphoribosyltransferase (338 aa).

Residues Gly-78, 81 to 82 (GD), Thr-86, 88 to 91 (NIST), 106 to 114 (KHGNRSVSS), and Ser-118 contribute to the 5-phospho-alpha-D-ribose 1-diphosphate site. Gly-78 provides a ligand contact to anthranilate. Ser-90 is a binding site for Mg(2+). Asn-109 lines the anthranilate pocket. Residue Arg-164 coordinates anthranilate. Positions 223 and 224 each coordinate Mg(2+).

Belongs to the anthranilate phosphoribosyltransferase family. In terms of assembly, homodimer. It depends on Mg(2+) as a cofactor.

It carries out the reaction N-(5-phospho-beta-D-ribosyl)anthranilate + diphosphate = 5-phospho-alpha-D-ribose 1-diphosphate + anthranilate. It participates in amino-acid biosynthesis; L-tryptophan biosynthesis; L-tryptophan from chorismate: step 2/5. In terms of biological role, catalyzes the transfer of the phosphoribosyl group of 5-phosphorylribose-1-pyrophosphate (PRPP) to anthranilate to yield N-(5'-phosphoribosyl)-anthranilate (PRA). The polypeptide is Anthranilate phosphoribosyltransferase (Bacillus licheniformis (strain ATCC 14580 / DSM 13 / JCM 2505 / CCUG 7422 / NBRC 12200 / NCIMB 9375 / NCTC 10341 / NRRL NRS-1264 / Gibson 46)).